We begin with the raw amino-acid sequence, 333 residues long: Phosphoribosylformylglycinamidine cyclo-ligase (333 aa).

The protein belongs to the AIR synthase family.

Its subcellular location is the cytoplasm. It catalyses the reaction 2-formamido-N(1)-(5-O-phospho-beta-D-ribosyl)acetamidine + ATP = 5-amino-1-(5-phospho-beta-D-ribosyl)imidazole + ADP + phosphate + H(+). The protein operates within purine metabolism; IMP biosynthesis via de novo pathway; 5-amino-1-(5-phospho-D-ribosyl)imidazole from N(2)-formyl-N(1)-(5-phospho-D-ribosyl)glycinamide: step 2/2. The sequence is that of Phosphoribosylformylglycinamidine cyclo-ligase from Clostridium perfringens (strain 13 / Type A).